Reading from the N-terminus, the 693-residue chain is Elongation factor G (693 aa).

The region spanning 8–284 is the tr-type G domain; the sequence is DMTRNVGIMA…AIVNYMPAPT (277 aa). GTP contacts are provided by residues 17-24, 81-85, and 135-138; these read AHIDAGKT, DTPGH, and NKMD.

Belongs to the TRAFAC class translation factor GTPase superfamily. Classic translation factor GTPase family. EF-G/EF-2 subfamily.

It is found in the cytoplasm. Its function is as follows. Catalyzes the GTP-dependent ribosomal translocation step during translation elongation. During this step, the ribosome changes from the pre-translocational (PRE) to the post-translocational (POST) state as the newly formed A-site-bound peptidyl-tRNA and P-site-bound deacylated tRNA move to the P and E sites, respectively. Catalyzes the coordinated movement of the two tRNA molecules, the mRNA and conformational changes in the ribosome. This Fusobacterium nucleatum subsp. nucleatum (strain ATCC 25586 / DSM 15643 / BCRC 10681 / CIP 101130 / JCM 8532 / KCTC 2640 / LMG 13131 / VPI 4355) protein is Elongation factor G.